Consider the following 498-residue polypeptide: Acetyl-coenzyme A carboxylase carboxyl transferase subunit beta, chloroplastic (498 aa).

Residues 36 to 59 form a disordered region; sequence SVNEDPIINDMDKDIPSGSDSDNS. Residues 231-498 form the CoA carboxyltransferase N-terminal domain; the sequence is LWVQCENCYG…FFPLNQNSIK (268 aa). Zn(2+) contacts are provided by Cys235, Cys238, Cys254, and Cys257. The segment at 235–257 adopts a C4-type zinc-finger fold; the sequence is CENCYGLNYKRFLKSKMNICEHC.

This sequence belongs to the AccD/PCCB family. Acetyl-CoA carboxylase is a heterohexamer composed of biotin carboxyl carrier protein, biotin carboxylase and 2 subunits each of ACCase subunit alpha and ACCase plastid-coded subunit beta (accD). The cofactor is Zn(2+).

The protein resides in the plastid. Its subcellular location is the chloroplast stroma. It catalyses the reaction N(6)-carboxybiotinyl-L-lysyl-[protein] + acetyl-CoA = N(6)-biotinyl-L-lysyl-[protein] + malonyl-CoA. Its pathway is lipid metabolism; malonyl-CoA biosynthesis; malonyl-CoA from acetyl-CoA: step 1/1. Component of the acetyl coenzyme A carboxylase (ACC) complex. Biotin carboxylase (BC) catalyzes the carboxylation of biotin on its carrier protein (BCCP) and then the CO(2) group is transferred by the transcarboxylase to acetyl-CoA to form malonyl-CoA. The sequence is that of Acetyl-coenzyme A carboxylase carboxyl transferase subunit beta, chloroplastic from Morus indica (Mulberry).